The primary structure comprises 476 residues: uncharacterized protein (476 aa).

A signal peptide spans 1–24 (MIRKSATGVIVALAVIWGGGTWYT).

To E.coli YdgA and H.influenzae HI_1236.

This is an uncharacterized protein from Escherichia coli (strain K12).